Consider the following 449-residue polypeptide: Glutamyl-tRNA reductase (449 aa).

Substrate contacts are provided by residues 58 to 61 (TCNR), S121, 126 to 128 (ETQ), and Q132. Catalysis depends on C59, which acts as the Nucleophile. Residue 203–208 (GLGEMA) participates in NADP(+) binding.

The protein belongs to the glutamyl-tRNA reductase family. As to quaternary structure, homodimer.

It carries out the reaction (S)-4-amino-5-oxopentanoate + tRNA(Glu) + NADP(+) = L-glutamyl-tRNA(Glu) + NADPH + H(+). It participates in porphyrin-containing compound metabolism; protoporphyrin-IX biosynthesis; 5-aminolevulinate from L-glutamyl-tRNA(Glu): step 1/2. Functionally, catalyzes the NADPH-dependent reduction of glutamyl-tRNA(Glu) to glutamate 1-semialdehyde (GSA). The polypeptide is Glutamyl-tRNA reductase (Helicobacter pylori (strain HPAG1)).